The following is a 572-amino-acid chain: Proline--tRNA ligase (572 aa).

The protein belongs to the class-II aminoacyl-tRNA synthetase family. ProS type 1 subfamily. In terms of assembly, homodimer.

The protein localises to the cytoplasm. The enzyme catalyses tRNA(Pro) + L-proline + ATP = L-prolyl-tRNA(Pro) + AMP + diphosphate. Catalyzes the attachment of proline to tRNA(Pro) in a two-step reaction: proline is first activated by ATP to form Pro-AMP and then transferred to the acceptor end of tRNA(Pro). As ProRS can inadvertently accommodate and process non-cognate amino acids such as alanine and cysteine, to avoid such errors it has two additional distinct editing activities against alanine. One activity is designated as 'pretransfer' editing and involves the tRNA(Pro)-independent hydrolysis of activated Ala-AMP. The other activity is designated 'posttransfer' editing and involves deacylation of mischarged Ala-tRNA(Pro). The misacylated Cys-tRNA(Pro) is not edited by ProRS. The chain is Proline--tRNA ligase from Escherichia fergusonii (strain ATCC 35469 / DSM 13698 / CCUG 18766 / IAM 14443 / JCM 21226 / LMG 7866 / NBRC 102419 / NCTC 12128 / CDC 0568-73).